Consider the following 284-residue polypeptide: Undecaprenyl-diphosphatase (284 aa).

Helical transmembrane passes span 7-27 (IILG…TGHL), 44-64 (EMFD…LYFH), 90-110 (LWLK…PLND), 116-136 (FYHF…FIVI), 167-187 (VLSL…ALLI), 197-217 (FTFF…ILHF), 229-249 (FGVL…AIKF), and 259-279 (FTFF…YAAF).

Belongs to the UppP family.

Its subcellular location is the cell membrane. It carries out the reaction di-trans,octa-cis-undecaprenyl diphosphate + H2O = di-trans,octa-cis-undecaprenyl phosphate + phosphate + H(+). Its function is as follows. Catalyzes the dephosphorylation of undecaprenyl diphosphate (UPP). Confers resistance to bacitracin. The protein is Undecaprenyl-diphosphatase of Lactococcus lactis subsp. cremoris (strain SK11).